Reading from the N-terminus, the 181-residue chain is Alkyl hydroperoxide reductase AhpD (181 aa).

The active-site Proton donor is C131. A disulfide bridge connects residues C131 and C134. C134 serves as the catalytic Cysteine sulfenic acid (-SOH) intermediate.

The protein belongs to the AhpD family.

It carries out the reaction N(6)-[(R)-dihydrolipoyl]-L-lysyl-[lipoyl-carrier protein] + a hydroperoxide = N(6)-[(R)-lipoyl]-L-lysyl-[lipoyl-carrier protein] + an alcohol + H2O. Its function is as follows. Antioxidant protein with alkyl hydroperoxidase activity. Required for the reduction of the AhpC active site cysteine residues and for the regeneration of the AhpC enzyme activity. The protein is Alkyl hydroperoxide reductase AhpD of Rhodopseudomonas palustris (strain BisA53).